Reading from the N-terminus, the 387-residue chain is 3-ketoacyl-CoA thiolase (387 aa).

Catalysis depends on Cys91, which acts as the Acyl-thioester intermediate. Active-site proton acceptor residues include His343 and Cys373.

The protein belongs to the thiolase-like superfamily. Thiolase family. In terms of assembly, heterotetramer of two alpha chains (FadB) and two beta chains (FadA).

It is found in the cytoplasm. The catalysed reaction is an acyl-CoA + acetyl-CoA = a 3-oxoacyl-CoA + CoA. It participates in lipid metabolism; fatty acid beta-oxidation. Its function is as follows. Catalyzes the final step of fatty acid oxidation in which acetyl-CoA is released and the CoA ester of a fatty acid two carbons shorter is formed. The sequence is that of 3-ketoacyl-CoA thiolase from Escherichia coli O6:K15:H31 (strain 536 / UPEC).